Consider the following 417-residue polypeptide: CinA-like protein (417 aa).

It belongs to the CinA family.

In Gloeothece citriformis (strain PCC 7424) (Cyanothece sp. (strain PCC 7424)), this protein is CinA-like protein.